The primary structure comprises 134 residues: Holo-[acyl-carrier-protein] synthase (134 aa).

Mg(2+) is bound by residues aspartate 8 and glutamate 57.

Belongs to the P-Pant transferase superfamily. AcpS family. It depends on Mg(2+) as a cofactor.

It localises to the cytoplasm. The catalysed reaction is apo-[ACP] + CoA = holo-[ACP] + adenosine 3',5'-bisphosphate + H(+). Transfers the 4'-phosphopantetheine moiety from coenzyme A to a Ser of acyl-carrier-protein. The sequence is that of Holo-[acyl-carrier-protein] synthase from Rhizobium etli (strain ATCC 51251 / DSM 11541 / JCM 21823 / NBRC 15573 / CFN 42).